A 190-amino-acid polypeptide reads, in one-letter code: GTP cyclohydrolase 1 (190 aa).

Residues Cys-80, His-83, and Cys-151 each coordinate Zn(2+).

Belongs to the GTP cyclohydrolase I family. In terms of assembly, toroid-shaped homodecamer, composed of two pentamers of five dimers.

It catalyses the reaction GTP + H2O = 7,8-dihydroneopterin 3'-triphosphate + formate + H(+). Its pathway is cofactor biosynthesis; 7,8-dihydroneopterin triphosphate biosynthesis; 7,8-dihydroneopterin triphosphate from GTP: step 1/1. This chain is GTP cyclohydrolase 1, found in Rickettsia typhi (strain ATCC VR-144 / Wilmington).